The primary structure comprises 122 residues: Large ribosomal subunit protein uL14 (122 aa).

Belongs to the universal ribosomal protein uL14 family. Part of the 50S ribosomal subunit. Forms a cluster with proteins L3 and L19. In the 70S ribosome, L14 and L19 interact and together make contacts with the 16S rRNA in bridges B5 and B8.

Its function is as follows. Binds to 23S rRNA. Forms part of two intersubunit bridges in the 70S ribosome. The protein is Large ribosomal subunit protein uL14 of Thermobifida fusca (strain YX).